The following is a 148-amino-acid chain: Helix-loop-helix protein 14 (148 aa).

3 disordered regions span residues 1–21 (MAKKNQVARNERERKRVHQVN), 63–83 (DPQQPSVSSSTPDYTMNNSNN), and 112–132 (GDVSHNFNSPTSSVSSSSYSP). The interval 4–17 (KNQVARNERERKRV) is basic motif. One can recognise a bHLH domain in the interval 4–56 (KNQVARNERERKRVHQVNHGFDVLRNRLQPKNHTKKWSKADTLREAVKYIQQL). Residues 18-56 (HQVNHGFDVLRNRLQPKNHTKKWSKADTLREAVKYIQQL) are helix-loop-helix motif. Residues 63–78 (DPQQPSVSSSTPDYTM) are compositionally biased toward polar residues. Positions 120–132 (SPTSSVSSSSYSP) are enriched in low complexity.

Its subcellular location is the nucleus. Probable transcription factor, involved in determining neuroblast cell fate, morphogenesis and aspects of terminal differentiation in both left/right symmetric and asymmetric neuronal lineages. The sequence is that of Helix-loop-helix protein 14 from Caenorhabditis elegans.